Consider the following 150-residue polypeptide: Large ribosomal subunit protein bL9 (150 aa).

This sequence belongs to the bacterial ribosomal protein bL9 family.

Its function is as follows. Binds to the 23S rRNA. This Corynebacterium diphtheriae (strain ATCC 700971 / NCTC 13129 / Biotype gravis) protein is Large ribosomal subunit protein bL9.